We begin with the raw amino-acid sequence, 100 residues long: Carboxysome shell vertex protein CcmL (100 aa).

The 83-residue stretch at M1 to D83 folds into the BMV domain.

The protein belongs to the CcmL/EutN family. CcmL subfamily. Homopentamer. Interacts with full-length CcmM.

The protein localises to the carboxysome. In terms of biological role, probably forms vertices in the carboxysome, a polyhedral inclusion where RuBisCO (ribulose bisphosphate carboxylase, rbcL-rbcS) is sequestered. Has been modeled to induce curvature upon insertion into an otherwise flat hexagonal molecular layer of CcmK subunits. The chain is Carboxysome shell vertex protein CcmL from Synechocystis sp. (strain ATCC 27184 / PCC 6803 / Kazusa).